A 338-amino-acid chain; its full sequence is Ketol-acid reductoisomerase (NADP(+)) (338 aa).

The KARI N-terminal Rossmann domain maps to 1 to 181; sequence MKVYYDKDAD…GGTKGGVIET (181 aa). NADP(+)-binding positions include 24 to 27, Arg47, Ser52, and 82 to 85; these read YGSQ and DETQ. His107 is an active-site residue. Gly133 contacts NADP(+). In terms of domain architecture, KARI C-terminal knotted spans 182-327; sequence SFREETETDL…AELRAMMPWI (146 aa). Mg(2+) contacts are provided by Asp190, Glu194, Glu226, and Glu230. Ser251 serves as a coordination point for substrate.

This sequence belongs to the ketol-acid reductoisomerase family. It depends on Mg(2+) as a cofactor.

The enzyme catalyses (2R)-2,3-dihydroxy-3-methylbutanoate + NADP(+) = (2S)-2-acetolactate + NADPH + H(+). The catalysed reaction is (2R,3R)-2,3-dihydroxy-3-methylpentanoate + NADP(+) = (S)-2-ethyl-2-hydroxy-3-oxobutanoate + NADPH + H(+). Its pathway is amino-acid biosynthesis; L-isoleucine biosynthesis; L-isoleucine from 2-oxobutanoate: step 2/4. It participates in amino-acid biosynthesis; L-valine biosynthesis; L-valine from pyruvate: step 2/4. Involved in the biosynthesis of branched-chain amino acids (BCAA). Catalyzes an alkyl-migration followed by a ketol-acid reduction of (S)-2-acetolactate (S2AL) to yield (R)-2,3-dihydroxy-isovalerate. In the isomerase reaction, S2AL is rearranged via a Mg-dependent methyl migration to produce 3-hydroxy-3-methyl-2-ketobutyrate (HMKB). In the reductase reaction, this 2-ketoacid undergoes a metal-dependent reduction by NADPH to yield (R)-2,3-dihydroxy-isovalerate. The sequence is that of Ketol-acid reductoisomerase (NADP(+)) from Laribacter hongkongensis (strain HLHK9).